A 189-amino-acid chain; its full sequence is ADP-ribosylation factor H (189 aa).

GTP is bound by residues 34 to 40, 75 to 79, and 134 to 137; these read DGAGKST, DVGGQ, and NKQD.

This sequence belongs to the small GTPase superfamily. Arf family.

It is found in the golgi apparatus. Functionally, GTP-binding protein that may be involved in protein trafficking. May modulate vesicle budding and uncoating within the Golgi apparatus. The protein is ADP-ribosylation factor H (arrH) of Dictyostelium discoideum (Social amoeba).